The sequence spans 493 residues: MSEYDIAKNDVTYTKLDTIECDIPINEELSWRINKFVNQLRISYSTLEEFVDNFVYELKKGLEAHRKHPNLWIPHECSFKMLDSCIANIPTGQEKGTYYAIDFGGTNFRAVRASLDGKGKIKRDQETYSLKFTGSYSHEKGLLDKHATASQLFDHFAERIKYIMGEFNDLDNKEVKSVGFTFSFPCTSPSINCSILIDWTKGFETGRATNDPVEGRDVCKLMNDAFVRAAIPAKVCCVLNDAVGTLMSCAYQKGRGTPPCYIGIILGTGSNGCYYEPEWKKYKYAGKIINIEFGNFDKDLPTSPIDLVMDWYSANRSRQLFEKMISGAYLGEIVRRFMVNVLQSACSKKMWISDSFNSESGSVVLNDTSKNFEDSRKVAKAAWDMDFTDEQIYVLRKICEAVYNRSAALARGTIAAIAKRIKIIEHSKFTCGVDGSLFVKNAWYCKRLQEHLKVILADKAENLIIIPADDGSGKGAAITAAVIALNADIPQLP.

Residues 27-481 (EELSWRINKF…SGKGAAITAA (455 aa)) enclose the Hexokinase domain. Residues 91 to 239 (TGQEKGTYYA…AIPAKVCCVL (149 aa)) are hexokinase small subdomain. Residue 102-107 (DFGGTN) coordinates ATP. Residues 177-203 (SVGFTFSFPCTSPSINCSILIDWTKGF) form a glucose-binding region. Residues 240-470 (NDAVGTLMSC…ENLIIIPADD (231 aa)) form a hexokinase large subdomain region.

Belongs to the hexokinase family.

It catalyses the reaction a D-hexose + ATP = a D-hexose 6-phosphate + ADP + H(+). It carries out the reaction D-mannose + ATP = D-mannose 6-phosphate + ADP + H(+). The catalysed reaction is D-fructose + ATP = D-fructose 6-phosphate + ADP + H(+). The enzyme catalyses D-glucose + ATP = D-glucose 6-phosphate + ADP + H(+). It participates in carbohydrate metabolism; hexose metabolism. Its pathway is carbohydrate degradation; glycolysis; D-glyceraldehyde 3-phosphate and glycerone phosphate from D-glucose: step 1/4. Functionally, catalyzes the phosphorylation of various hexoses to hexose 6-phosphate. The sequence is that of Hexokinase (HK) from Plasmodium falciparum.